A 249-amino-acid polypeptide reads, in one-letter code: Neurotrophic factor BDNF precursor form (249 aa).

The first 18 residues, 1-18 (MTILFLTMVISYFGCMKA), serve as a signal peptide directing secretion. Positions 19 to 130 (APMKEVNVHG…AANMSMRVRR (112 aa)) are excised as a propeptide. Asn-123 carries N-linked (GlcNAc...) asparagine glycosylation. 3 disulfide bridges follow: Cys-143–Cys-210, Cys-188–Cys-239, and Cys-198–Cys-241.

It belongs to the NGF-beta family. In terms of assembly, monomers and homodimers. Binds to NTRK2/TRKB. Can form heterodimers with other neurotrophin family members, such as NTF3 and NTF4 (in vitro), but the physiological relevance of this is not clear. BDNF precursor form: interacts with the heterodimer formed by NGFR and SORCS2. Mature BDNF has much lower affinity for the heterodimer formed by NGFR and SORCS2. In terms of processing, N-glycosylated and glycosulfated, contrary to mature BDNF. Mature BDNF is produced by proteolytic removal of the propeptide, catalyzed by a FURIN family member. In addition, the precursor form is proteolytically cleaved within the propeptide, but this is not an obligatory intermediate for the production of mature BDNF. Can be converted into mature BDNF by plasmin (PLG). Expressed in the dorsal root ganglion and the spinal cord (at protein level). Detected in brain, especially in brain cortex, hippocampus, midbrain and cerebellum.

The protein resides in the secreted. Important signaling molecule that activates signaling cascades downstream of NTRK2. During development, promotes the survival and differentiation of selected neuronal populations of the peripheral and central nervous systems. Participates in axonal growth, pathfinding and in the modulation of dendritic growth and morphology. Major regulator of synaptic transmission and plasticity at adult synapses in many regions of the CNS. The versatility of BDNF is emphasized by its contribution to a range of adaptive neuronal responses including long-term potentiation (LTP), long-term depression (LTD), certain forms of short-term synaptic plasticity, as well as homeostatic regulation of intrinsic neuronal excitability. In terms of biological role, important signaling molecule that activates signaling cascades downstream of NTRK2. Activates signaling cascades via the heterodimeric receptor formed by NGFR and SORCS2. Signaling via NGFR and SORCS2 plays a role in synaptic plasticity and long-term depression (LTD). Binding to NGFR and SORCS2 promotes neuronal apoptosis. Promotes neuronal growth cone collapse. The polypeptide is Neurotrophic factor BDNF precursor form (Bdnf) (Mus musculus (Mouse)).